Reading from the N-terminus, the 226-residue chain is Thymidylate kinase (226 aa).

Glycine 20–serine 27 is an ATP binding site.

Belongs to the thymidylate kinase family.

It catalyses the reaction dTMP + ATP = dTDP + ADP. In terms of biological role, phosphorylation of dTMP to form dTDP in both de novo and salvage pathways of dTTP synthesis. In Bradyrhizobium sp. (strain ORS 278), this protein is Thymidylate kinase.